Reading from the N-terminus, the 1000-residue chain is Kinesin-like protein CIN8 (1000 aa).

The segment covering 1 to 26 has biased composition (polar residues); the sequence is MPAENQNTGQDRSSNSISKNGNSQVG. Residues 1–28 are disordered; that stretch reads MPAENQNTGQDRSSNSISKNGNSQVGCH. The Kinesin motor domain maps to 36 to 477; it reads NITVAVRCRG…LEYASKAKNI (442 aa). Residue 128–135 coordinates ATP; sequence GMTSTGKT. The span at 220–242 shows a compositional bias: low complexity; sequence ANNTTSNSASSSRSNSRNSSPRS. 2 disordered regions span residues 220 to 248 and 260 to 312; these read ANNTTSNSASSSRSNSRNSSPRSLNDLTP and KSLP…PNDQ. Over residues 261–276 the composition is skewed to polar residues; the sequence is SLPNTIKQQYQQQQAV. The span at 277 to 301 shows a compositional bias: low complexity; it reads NSRNNSSSNSGSTTNNASSNTNTNN. Residues 302–312 are compositionally biased toward polar residues; sequence GQRSSMAPNDQ. Coiled-coil stretches lie at residues 518-615 and 860-904; these read MSQD…MALH and ISVM…IKNS. The segment at 970–1000 is disordered; the sequence is VISPKKHAIEDENKSSENVDNEGSRKMLKIE. At Ser972 the chain carries Phosphoserine. The segment covering 976–1000 has biased composition (basic and acidic residues); sequence HAIEDENKSSENVDNEGSRKMLKIE.

This sequence belongs to the TRAFAC class myosin-kinesin ATPase superfamily. Kinesin family. BimC subfamily.

It localises to the cytoplasm. The protein localises to the cytoskeleton. Its subcellular location is the spindle. The protein resides in the mitochondrion. Elongates the mitotic spindle by interacting with spindle microtubules to generate an outward force pushing spindle poles apart. Following spindle assembly, CIN8 and KIP1 apparently act to oppose a force, possibly generated by KAR3, that draws separated poles back together. This Saccharomyces cerevisiae (strain ATCC 204508 / S288c) (Baker's yeast) protein is Kinesin-like protein CIN8 (CIN8).